A 519-amino-acid chain; its full sequence is Seed lectin (519 aa).

Cystine bridges form between Cys-249–Cys-258 and Cys-274–Cys-293. Ricin B-type lectin domains are found at residues Glu-261–Gly-387 and Val-390–Phe-518. The 1-alpha repeat unit spans residues Asp-271–Ser-311. A carbohydrate contacts are provided by residues Asp-276–Gly-279 and Gln-296–Asn-298. The stretch at Leu-312 to Asn-352 is one 1-beta repeat. A disulfide bond links Cys-315 and Cys-332. One copy of the 1-gamma repeat lies at Glu-356–Asn-388. Asn-370 carries an N-linked (GlcNAc...) asparagine glycan. The 2-alpha repeat unit spans residues Asp-401–Val-438. Intrachain disulfides connect Cys-404–Cys-419 and Cys-445–Cys-464. One copy of the 2-beta repeat lies at Arg-442–Thr-482. A carbohydrate-binding positions include Asp-454, Asp-491 to Arg-494, His-505 to His-508, and Asn-512. A 2-gamma repeat occupies Gln-486–Gln-513.

The protein in the N-terminal section; belongs to the ribosome-inactivating protein family. Type 2 RIP subfamily. In terms of assembly, heterotrimer consisting of Aalpha, Abeta and B chains with Abeta and B being disulfide-linked.

Its function is as follows. Seed lectin similar to type 2 ribosome-inactivating proteins. The Aalpha and Abeta chains constitute the rRNA glycosidase domain and the B chain the carbohydrate-binding lectin domain. Is predicted to have no glycosidase activity and, hence, to be non-toxic, due to small changes in both the nucleotide binding and carbohydrate binding capabilities. Binds galactose and derivatives with a preference for the beta-anomeric forms. Binds prophyrins. Has hemagglutinating activity towards rabbit and human erythrocytes. This Trichosanthes anguina (Snake gourd) protein is Seed lectin.